Consider the following 239-residue polypeptide: Aspartate/glutamate leucyltransferase (239 aa).

It belongs to the R-transferase family. Bpt subfamily.

It is found in the cytoplasm. It carries out the reaction N-terminal L-glutamyl-[protein] + L-leucyl-tRNA(Leu) = N-terminal L-leucyl-L-glutamyl-[protein] + tRNA(Leu) + H(+). It catalyses the reaction N-terminal L-aspartyl-[protein] + L-leucyl-tRNA(Leu) = N-terminal L-leucyl-L-aspartyl-[protein] + tRNA(Leu) + H(+). Functionally, functions in the N-end rule pathway of protein degradation where it conjugates Leu from its aminoacyl-tRNA to the N-termini of proteins containing an N-terminal aspartate or glutamate. The sequence is that of Aspartate/glutamate leucyltransferase from Campylobacter jejuni subsp. jejuni serotype O:2 (strain ATCC 700819 / NCTC 11168).